Reading from the N-terminus, the 197-residue chain is Imidazoleglycerol-phosphate dehydratase (197 aa).

This sequence belongs to the imidazoleglycerol-phosphate dehydratase family.

It is found in the cytoplasm. It carries out the reaction D-erythro-1-(imidazol-4-yl)glycerol 3-phosphate = 3-(imidazol-4-yl)-2-oxopropyl phosphate + H2O. Its pathway is amino-acid biosynthesis; L-histidine biosynthesis; L-histidine from 5-phospho-alpha-D-ribose 1-diphosphate: step 6/9. This is Imidazoleglycerol-phosphate dehydratase from Bradyrhizobium sp. (strain BTAi1 / ATCC BAA-1182).